A 313-amino-acid chain; its full sequence is tRNA-cytidine(32) 2-sulfurtransferase (313 aa).

The PP-loop motif signature appears at 46–51 (SGGKDS). 3 residues coordinate [4Fe-4S] cluster: C121, C124, and C212.

This sequence belongs to the TtcA family. As to quaternary structure, homodimer. Requires Mg(2+) as cofactor. It depends on [4Fe-4S] cluster as a cofactor.

It is found in the cytoplasm. The enzyme catalyses cytidine(32) in tRNA + S-sulfanyl-L-cysteinyl-[cysteine desulfurase] + AH2 + ATP = 2-thiocytidine(32) in tRNA + L-cysteinyl-[cysteine desulfurase] + A + AMP + diphosphate + H(+). The protein operates within tRNA modification. Its function is as follows. Catalyzes the ATP-dependent 2-thiolation of cytidine in position 32 of tRNA, to form 2-thiocytidine (s(2)C32). The sulfur atoms are provided by the cysteine/cysteine desulfurase (IscS) system. This Nitrosomonas eutropha (strain DSM 101675 / C91 / Nm57) protein is tRNA-cytidine(32) 2-sulfurtransferase.